The following is a 185-amino-acid chain: Prenylated Rab acceptor protein 1 (185 aa).

The Cytoplasmic portion of the chain corresponds to 1–78 (MAAQKDQQKD…RNVEYYQSNY (78 aa)). The segment at 30–54 (AGREWLERRRATIRPWSTFVDQQRF) is required for interaction with prenylated RAB3A and VAMP2. 2 consecutive transmembrane segments (helical) span residues 79 to 94 (VFVF…VTSP) and 95 to 112 (MLLV…ILYL). Residues 113 to 131 (RTLESKLVLFGREVSPAHQ) are Cytoplasmic-facing. 2 helical membrane passes run 132–148 (YALA…LAGA) and 149–165 (GSAV…VIGS). The tract at residues 165 to 185 (SHAAFHQIEAVDGEELQMEPV) is required for interaction with GDI1. Topologically, residues 166–185 (HAAFHQIEAVDGEELQMEPV) are cytoplasmic. Positions 175–185 (VDGEELQMEPV) are required for interaction with prenylated RAB3A and VAMP2. Residues 175 to 185 (VDGEELQMEPV) form a homodimerization region.

This sequence belongs to the PRA1 family. As to quaternary structure, homodimer. Interacts with VAMP2 (synaptobrevin-2), GDI1, and PCLO. Interacts specifically with prenylated Rab proteins; strongly with RAB4B, RAB5A and RAB5C, and weakly with RAB4A, RAB6, RAB7A, RAB17 and RAB22. Interacts with NDRG1. In terms of tissue distribution, ubiquitous. Strongest expression found in placenta, pituitary gland, kidney, lung and stomach.

The protein localises to the cell membrane. It localises to the cytoplasm. The protein resides in the golgi apparatus. Its subcellular location is the cytoplasmic vesicle. It is found in the secretory vesicle. The protein localises to the synaptic vesicle. General Rab protein regulator required for vesicle formation from the Golgi complex. May control vesicle docking and fusion by mediating the action of Rab GTPases to the SNARE complexes. In addition it inhibits the removal of Rab GTPases from the membrane by GDI. The polypeptide is Prenylated Rab acceptor protein 1 (RABAC1) (Homo sapiens (Human)).